The primary structure comprises 153 residues: FAD synthase (153 aa).

ATP contacts are provided by residues 9–10, 14–17, and Asp-92; these read TF and HPGH.

This sequence belongs to the archaeal FAD synthase family. In terms of assembly, homodimer. The cofactor is a divalent metal cation.

The catalysed reaction is FMN + ATP + H(+) = FAD + diphosphate. Its pathway is cofactor biosynthesis; FAD biosynthesis; FAD from FMN: step 1/1. In terms of biological role, catalyzes the transfer of the AMP portion of ATP to flavin mononucleotide (FMN) to produce flavin adenine dinucleotide (FAD) coenzyme. The chain is FAD synthase from Halorubrum lacusprofundi (strain ATCC 49239 / DSM 5036 / JCM 8891 / ACAM 34).